A 327-amino-acid polypeptide reads, in one-letter code: Tryptophan--tRNA ligase (327 aa).

ATP contacts are provided by residues 9-11 and 17-18; these read RPT and GN. A 'HIGH' region motif is present at residues 10–18; it reads PTGNLHLGN. Asp133 is an L-tryptophan binding site. Residues 145 to 147, Val186, and 194 to 198 contribute to the ATP site; these read GKD and KMGKS. The 'KMSKS' region signature appears at 194–198; that stretch reads KMGKS.

The protein belongs to the class-I aminoacyl-tRNA synthetase family. In terms of assembly, homodimer.

The protein resides in the cytoplasm. It catalyses the reaction tRNA(Trp) + L-tryptophan + ATP = L-tryptophyl-tRNA(Trp) + AMP + diphosphate + H(+). In terms of biological role, catalyzes the attachment of tryptophan to tRNA(Trp). The sequence is that of Tryptophan--tRNA ligase from Porphyromonas gingivalis (strain ATCC BAA-308 / W83).